The primary structure comprises 1015 residues: Proline-rich basic protein 1 (1015 aa).

7 disordered regions span residues 1–111 (MLTA…SGEM), 139–164 (AFISPLPPGPASPAAVPRQSQVPDGG), 196–236 (GAAP…RTGS), 259–460 (LSPE…ILSQ), 488–678 (DAVE…APAH), 690–883 (VVPH…GKVL), and 991–1015 (PPLLLCAPPSSSGPTQPGKGSLFPL). The segment covering 84 to 94 (PGSGFPRGPGS) has biased composition (gly residues). Low complexity predominate over residues 220–233 (PRAAGAPRPRLLLR). Residues 267 to 276 (SSATFGSTGR) are compositionally biased toward polar residues. Composition is skewed to basic and acidic residues over residues 277 to 304 (SEPETRETARSTHVVLEKAKSRPLRVRD), 318 to 328 (LRERAIRRDKP), and 346 to 367 (SEEKIQEARKTRFPREAPDRTV). Residues 380–391 (PSEVPSRAVRPR) are compositionally biased toward low complexity. The span at 531–542 (IAFTQEAQNGLT) shows a compositional bias: polar residues. 2 stretches are compositionally biased toward pro residues: residues 548-557 (PPTPSAPGTP) and 691-700 (VPHPYEPPEP). Basic and acidic residues predominate over residues 759 to 774 (ENRDVEAQRLVPDGDG). Residues 813–825 (GIAPKPKTPPTAP) show a composition bias toward pro residues. Low complexity-rich tracts occupy residues 826-835 (EPAAAVQAPL) and 847-858 (APAQPRAASAPP). Over residues 861–870 (RSPQSPSQGA) the composition is skewed to polar residues. Low complexity predominate over residues 993 to 1004 (LLLCAPPSSSGP).

This Homo sapiens (Human) protein is Proline-rich basic protein 1 (PROB1).